The sequence spans 425 residues: Serine--tRNA ligase (425 aa).

Residue 233 to 235 coordinates L-serine; sequence TAE. Position 264–266 (264–266) interacts with ATP; it reads RRE. Position 287 (Glu287) interacts with L-serine. 351 to 354 is an ATP binding site; the sequence is EISS. Position 387 (Ser387) interacts with L-serine.

Belongs to the class-II aminoacyl-tRNA synthetase family. Type-1 seryl-tRNA synthetase subfamily. As to quaternary structure, homodimer. The tRNA molecule binds across the dimer.

It localises to the cytoplasm. The enzyme catalyses tRNA(Ser) + L-serine + ATP = L-seryl-tRNA(Ser) + AMP + diphosphate + H(+). It catalyses the reaction tRNA(Sec) + L-serine + ATP = L-seryl-tRNA(Sec) + AMP + diphosphate + H(+). It participates in aminoacyl-tRNA biosynthesis; selenocysteinyl-tRNA(Sec) biosynthesis; L-seryl-tRNA(Sec) from L-serine and tRNA(Sec): step 1/1. In terms of biological role, catalyzes the attachment of serine to tRNA(Ser). Is also able to aminoacylate tRNA(Sec) with serine, to form the misacylated tRNA L-seryl-tRNA(Sec), which will be further converted into selenocysteinyl-tRNA(Sec). This is Serine--tRNA ligase from Thermotoga sp. (strain RQ2).